The primary structure comprises 1070 residues: DNA-directed RNA polymerase subunit beta (1070 aa).

It belongs to the RNA polymerase beta chain family. As to quaternary structure, in plastids the minimal PEP RNA polymerase catalytic core is composed of four subunits: alpha, beta, beta', and beta''. When a (nuclear-encoded) sigma factor is associated with the core the holoenzyme is formed, which can initiate transcription.

It localises to the plastid. It is found in the chloroplast. It carries out the reaction RNA(n) + a ribonucleoside 5'-triphosphate = RNA(n+1) + diphosphate. Functionally, DNA-dependent RNA polymerase catalyzes the transcription of DNA into RNA using the four ribonucleoside triphosphates as substrates. The protein is DNA-directed RNA polymerase subunit beta of Piper cenocladum (Ant piper).